An 88-amino-acid polypeptide reads, in one-letter code: Large ribosomal subunit protein bL27 (88 aa).

A disordered region spans residues 1–22 (MAHKKGASSSRNGRDSNAQRLG). Residues 7–19 (ASSSRNGRDSNAQ) show a composition bias toward polar residues.

Belongs to the bacterial ribosomal protein bL27 family.

This is Large ribosomal subunit protein bL27 from Mycolicibacterium gilvum (strain PYR-GCK) (Mycobacterium gilvum (strain PYR-GCK)).